We begin with the raw amino-acid sequence, 88 residues long: Large ribosomal subunit protein bL27 (88 aa).

The tract at residues 1–23 (MAHKKGTGSTRNGRDSNSKRLGV) is disordered.

This sequence belongs to the bacterial ribosomal protein bL27 family.

The protein is Large ribosomal subunit protein bL27 of Synechococcus sp. (strain CC9902).